Reading from the N-terminus, the 207-residue chain is Uridine kinase (207 aa).

Position 13 to 20 (13 to 20 (GASGSGKT)) interacts with ATP.

The protein belongs to the uridine kinase family.

It is found in the cytoplasm. It catalyses the reaction uridine + ATP = UMP + ADP + H(+). The catalysed reaction is cytidine + ATP = CMP + ADP + H(+). The protein operates within pyrimidine metabolism; CTP biosynthesis via salvage pathway; CTP from cytidine: step 1/3. Its pathway is pyrimidine metabolism; UMP biosynthesis via salvage pathway; UMP from uridine: step 1/1. The chain is Uridine kinase from Ureaplasma parvum serovar 3 (strain ATCC 27815 / 27 / NCTC 11736).